Here is a 91-residue protein sequence, read N- to C-terminus: Small ribosomal subunit protein uS19 (91 aa).

This sequence belongs to the universal ribosomal protein uS19 family.

In terms of biological role, protein S19 forms a complex with S13 that binds strongly to the 16S ribosomal RNA. The chain is Small ribosomal subunit protein uS19 from Burkholderia cenocepacia (strain HI2424).